We begin with the raw amino-acid sequence, 259 residues long: GTP cyclohydrolase FolE2 (259 aa).

It belongs to the GTP cyclohydrolase IV family.

The catalysed reaction is GTP + H2O = 7,8-dihydroneopterin 3'-triphosphate + formate + H(+). It functions in the pathway cofactor biosynthesis; 7,8-dihydroneopterin triphosphate biosynthesis; 7,8-dihydroneopterin triphosphate from GTP: step 1/1. In terms of biological role, converts GTP to 7,8-dihydroneopterin triphosphate. The chain is GTP cyclohydrolase FolE2 from Thermosipho africanus (strain TCF52B).